Reading from the N-terminus, the 181-residue chain is Large ribosomal subunit protein uL5 (181 aa).

This sequence belongs to the universal ribosomal protein uL5 family. As to quaternary structure, part of the 50S ribosomal subunit; contacts the 5S rRNA and probably tRNA. Forms a bridge to the 30S subunit in the 70S ribosome.

In terms of biological role, this is one of the proteins that bind and probably mediate the attachment of the 5S RNA into the large ribosomal subunit, where it forms part of the central protuberance. In the 70S ribosome it contacts protein S13 of the 30S subunit (bridge B1b), connecting the 2 subunits; this bridge is implicated in subunit movement. May contact the P site tRNA; the 5S rRNA and some of its associated proteins might help stabilize positioning of ribosome-bound tRNAs. The protein is Large ribosomal subunit protein uL5 of Methanococcus aeolicus (strain ATCC BAA-1280 / DSM 17508 / OCM 812 / Nankai-3).